Here is a 63-residue protein sequence, read N- to C-terminus: Large ribosomal subunit protein bL33 (63 aa).

The protein belongs to the bacterial ribosomal protein bL33 family.

The sequence is that of Large ribosomal subunit protein bL33 from Gloeobacter violaceus (strain ATCC 29082 / PCC 7421).